A 157-amino-acid polypeptide reads, in one-letter code: Transcription elongation factor GreA (157 aa).

The protein belongs to the GreA/GreB family.

Necessary for efficient RNA polymerase transcription elongation past template-encoded arresting sites. The arresting sites in DNA have the property of trapping a certain fraction of elongating RNA polymerases that pass through, resulting in locked ternary complexes. Cleavage of the nascent transcript by cleavage factors such as GreA or GreB allows the resumption of elongation from the new 3'terminus. GreA releases sequences of 2 to 3 nucleotides. The chain is Transcription elongation factor GreA from Mesorhizobium japonicum (strain LMG 29417 / CECT 9101 / MAFF 303099) (Mesorhizobium loti (strain MAFF 303099)).